Here is a 380-residue protein sequence, read N- to C-terminus: E3 ubiquitin-protein ligase RNF13 (380 aa).

The signal sequence occupies residues 1–34; that stretch reads MLLSIGMLMLSATQVYTILTVQLFAFLNLLPVEA. The Lumenal portion of the chain corresponds to 35–182; that stretch reads DILAYNFENA…VPELSLPLEY (148 aa). A PA domain is found at 64-160; it reads LKGFLINSKP…GESSANSLKD (97 aa). Asn-88 carries an N-linked (GlcNAc...) asparagine glycan. A helical membrane pass occupies residues 183–203; the sequence is YLIPFLIIVGICLILIVIFMI. Residues 204 to 380 lie on the Cytoplasmic side of the membrane; it reads TKFVQDRHRN…EPDYNIANTV (177 aa). The RING-type; atypical zinc-finger motif lies at 240 to 282; it reads CAICLEEYEDGDKLRILPCSHAYHCKCVDPWLTKTKKTCPVCK. The disordered stretch occupies residues 285-380; it reads VVPSQGDSDS…EPDYNIANTV (96 aa). Over residues 338–356 the composition is skewed to acidic residues; it reads SDYEDDDNEETDSSDADNE.

Interacts with ERN1. Autoubiquitinated.

It is found in the endoplasmic reticulum membrane. The protein resides in the late endosome membrane. Its subcellular location is the lysosome membrane. It localises to the nucleus inner membrane. The enzyme catalyses S-ubiquitinyl-[E2 ubiquitin-conjugating enzyme]-L-cysteine + [acceptor protein]-L-lysine = [E2 ubiquitin-conjugating enzyme]-L-cysteine + N(6)-ubiquitinyl-[acceptor protein]-L-lysine.. The protein operates within protein modification; protein ubiquitination. Functionally, E3 ubiquitin-protein ligase that regulates cell proliferation. Involved in apoptosis regulation. Mediates ER stress-induced activation of JNK signaling pathway and apoptosis by promoting ERN1 activation and splicing of XBP1 mRNA. Also involved in protein trafficking and localization. The polypeptide is E3 ubiquitin-protein ligase RNF13 (Rnf13) (Rattus norvegicus (Rat)).